We begin with the raw amino-acid sequence, 221 residues long: Phosphoglycolate phosphatase (221 aa).

Asp-7 (nucleophile) is an active-site residue. Mg(2+) is bound by residues Asp-7 and Asp-9. Lys-148 lines the substrate pocket. Mg(2+) contacts are provided by Asp-171 and Asp-175.

It belongs to the archaeal SPP-like hydrolase family. The cofactor is Mg(2+).

It catalyses the reaction 2-phosphoglycolate + H2O = glycolate + phosphate. Catalyzes the dephosphorylation of 2-phosphoglycolate. The polypeptide is Phosphoglycolate phosphatase (Methanothermobacter thermautotrophicus (strain ATCC 29096 / DSM 1053 / JCM 10044 / NBRC 100330 / Delta H) (Methanobacterium thermoautotrophicum)).